The sequence spans 420 residues: Glycogen synthase kinase-3 beta (420 aa).

Positions 1 to 22 are enriched in polar residues; sequence MSGRPRTTSFAESCKPVQQPSA. The disordered stretch occupies residues 1-53; the sequence is MSGRPRTTSFAESCKPVQQPSAFGSMKVSRDKDGSKVTTVVATPGQGPDRPQE. Residue Ser-9 is modified to Phosphoserine; by PKB/AKT1, RPS6KA3 and SGK3. The S-palmitoyl cysteine moiety is linked to residue Cys-14. Positions 56 to 340 constitute a Protein kinase domain; sequence YTDTKVIGNG…PLEACAHSFF (285 aa). Residues 62 to 70 and Lys-85 each bind ATP; that span reads IGNGSFGVV. Asp-181 serves as the catalytic Proton acceptor. The residue at position 216 (Tyr-216) is a Phosphotyrosine. Residues 385–420 form a disordered region; that stretch reads QAAASPPANATAASDTNAGDRGQTNNAASASASNST. Low complexity-rich tracts occupy residues 386 to 401 and 409 to 420; these read AAASPPANATAASDTN and NNAASASASNST. Ser-389 is subject to Phosphoserine.

It belongs to the protein kinase superfamily. CMGC Ser/Thr protein kinase family. GSK-3 subfamily. In terms of assembly, monomer. Interacts with DAB2IP (via C2 domain); the interaction stimulates GSK3B kinase activation. Interacts (via C2 domain) with PPP2CA. Interacts with ARRB2, AXIN1, CABYR, DISC1, MMP2, MUC1, NIN, PRUNE1 and ZBED3. Interacts with AXIN1; the interaction mediates hyperphosphorylation of CTNNB1 leading to its ubiquitination and destruction. Interacts with and phosphorylates SNAI1. Interacts with DNM1L (via a C-terminal domain). Found in a complex composed of MACF1, APC, AXIN1, CTNNB1 and GSK3B. Interacts with SGK3. Interacts with the CLOCK-BMAL1 heterodimer. Interacts with the BMAL1. Interacts with CTNND2. The complex composed, at least, of APC, CTNNB1 and GSK3B interacts with JPT1; the interaction requires the inactive form of GSK3B (phosphorylated at 'Ser-9'). Forms a complex composed of PRKAR2A or PRKAR2B, GSK3B and GSKIP through GSKIP interaction; facilitates PKA-induced phosphorylation and regulates GSK3B activity. Interacts with GSKIP. Interacts with GID8. Interacts with PIWIL2. Interacts with LMBR1L. Interacts with DDX3X. Interacts with BIRC2. Interacts with TNFRSF10B; TNFRSF10B stimulation inhibits GSK3B kinase activity. Found in a complex with SLC39A6, SLC39A10 and with GSK3B that controls NCAM1 phosphorylation. Interacts with PKP3 (via ARM repeats); the interaction may be involved in PKP3 protein degradation. In terms of processing, phosphorylated by AKT1 and ILK1. Upon insulin-mediated signaling, the activated PKB/AKT1 and RPS6KA3 protein kinases phosphorylate and deactivate GSK3B, resulting in the dephosphorylation and activation of GYS1. Activated by phosphorylation at Tyr-216. Inactivated by phosphorylation at Ser-9. Phosphorylated in a circadian manner in the hippocampus. Mono-ADP-ribosylation by PARP10 negatively regulates kinase activity. Post-translationally, palmitoylated. Palmitoylation by ZDHHC4 prevents AKT1-mediated phosphorylation.

It is found in the cytoplasm. The protein resides in the nucleus. Its subcellular location is the membrane. The protein localises to the cell membrane. The enzyme catalyses L-seryl-[tau protein] + ATP = O-phospho-L-seryl-[tau protein] + ADP + H(+). It carries out the reaction L-threonyl-[tau protein] + ATP = O-phospho-L-threonyl-[tau protein] + ADP + H(+). The catalysed reaction is L-seryl-[protein] + ATP = O-phospho-L-seryl-[protein] + ADP + H(+). It catalyses the reaction L-threonyl-[protein] + ATP = O-phospho-L-threonyl-[protein] + ADP + H(+). Activated by phosphorylation at Tyr-216. In response to insulin, inhibited by phosphorylation at Ser-9 by PKB/AKT1; phosphorylation at this site causes a conformational change, preventing access of substrates to the active site. Inhibited by IL22 treatment which also triggers phosphorylation at Ser-9, promoting inactivation. Inhibited by lithium. Constitutively active protein kinase that acts as a negative regulator in the hormonal control of glucose homeostasis, Wnt signaling and regulation of transcription factors and microtubules, by phosphorylating and inactivating glycogen synthase (GYS1 or GYS2), EIF2B, CTNNB1/beta-catenin, APC, AXIN1, DPYSL2/CRMP2, JUN, NFATC1/NFATC, MAPT/TAU and MACF1. Requires primed phosphorylation of the majority of its substrates. In skeletal muscle, contributes to insulin regulation of glycogen synthesis by phosphorylating and inhibiting GYS1 activity and hence glycogen synthesis. May also mediate the development of insulin resistance by regulating activation of transcription factors. Regulates protein synthesis by controlling the activity of initiation factor 2B (EIF2BE/EIF2B5) in the same manner as glycogen synthase. In Wnt signaling, GSK3B forms a multimeric complex with APC, AXIN1 and CTNNB1/beta-catenin and phosphorylates the N-terminus of CTNNB1 leading to its degradation mediated by ubiquitin/proteasomes. Phosphorylates JUN at sites proximal to its DNA-binding domain, thereby reducing its affinity for DNA. Phosphorylates NFATC1/NFATC on conserved serine residues promoting NFATC1/NFATC nuclear export, shutting off NFATC1/NFATC gene regulation, and thereby opposing the action of calcineurin. Phosphorylates MAPT/TAU on 'Thr-548', decreasing significantly MAPT/TAU ability to bind and stabilize microtubules. MAPT/TAU is the principal component of neurofibrillary tangles in Alzheimer disease. Plays an important role in ERBB2-dependent stabilization of microtubules at the cell cortex. Phosphorylates MACF1, inhibiting its binding to microtubules which is critical for its role in bulge stem cell migration and skin wound repair. Probably regulates NF-kappa-B (NFKB1) at the transcriptional level and is required for the NF-kappa-B-mediated anti-apoptotic response to TNF-alpha (TNF/TNFA). Negatively regulates replication in pancreatic beta-cells, resulting in apoptosis, loss of beta-cells and diabetes. Through phosphorylation of the anti-apoptotic protein MCL1, may control cell apoptosis in response to growth factors deprivation. Phosphorylates MUC1 in breast cancer cells, decreasing the interaction of MUC1 with CTNNB1/beta-catenin. Is necessary for the establishment of neuronal polarity and axon outgrowth. Phosphorylates MARK2, leading to inhibition of its activity. Phosphorylates SIK1 at 'Thr-182', leading to sustainment of its activity. Phosphorylates ZC3HAV1 which enhances its antiviral activity. Phosphorylates SNAI1, leading to its ubiquitination and proteasomal degradation. Phosphorylates SFPQ at 'Thr-687' upon T-cell activation. Phosphorylates NR1D1 st 'Ser-55' and 'Ser-59' and stabilizes it by protecting it from proteasomal degradation. Regulates the circadian clock via phosphorylation of the major clock components including BMAL1, CLOCK and PER2. Phosphorylates CLOCK AT 'Ser-427' and targets it for proteasomal degradation. Phosphorylates BMAL1 at 'Ser-17' and 'Ser-21' and primes it for ubiquitination and proteasomal degradation. Phosphorylates FBXL2 at 'Thr-404' and primes it for ubiquitination by the SCF(FBXO3) complex and proteasomal degradation. Phosphorylates OGT at 'Ser-3' or 'Ser-4' which positively regulates its activity. Phosphorylates MYCN in neuroblastoma cells which may promote its degradation. Regulates the circadian rhythmicity of hippocampal long-term potentiation and BMAL1 and PER2 expression. Acts as a regulator of autophagy by mediating phosphorylation of KAT5/TIP60 under starvation conditions, activating KAT5/TIP60 acetyltransferase activity and promoting acetylation of key autophagy regulators, such as ULK1 and RUBCNL/Pacer. Negatively regulates extrinsic apoptotic signaling pathway via death domain receptors. Promotes the formation of an anti-apoptotic complex, made of DDX3X, BRIC2 and GSK3B, at death receptors, including TNFRSF10B. The anti-apoptotic function is most effective with weak apoptotic signals and can be overcome by stronger stimulation. Phosphorylates E2F1, promoting the interaction between E2F1 and USP11, stabilizing E2F1 and promoting its activity. Phosphorylates mTORC2 complex component RICTOR at 'Ser-1235' in response to endoplasmic stress, inhibiting mTORC2. Phosphorylates FXR1, promoting FXR1 ubiquitination by the SCF(FBXO4) complex and FXR1 degradation by the proteasome. Phosphorylates interleukin-22 receptor subunit IL22RA1, preventing its proteasomal degradation. The sequence is that of Glycogen synthase kinase-3 beta from Rattus norvegicus (Rat).